We begin with the raw amino-acid sequence, 202 residues long: LexA repressor (202 aa).

A DNA-binding region (H-T-H motif) is located at residues V29–E49. Residues S125 and K162 each act as for autocatalytic cleavage activity in the active site.

Belongs to the peptidase S24 family. In terms of assembly, homodimer.

It catalyses the reaction Hydrolysis of Ala-|-Gly bond in repressor LexA.. Represses a number of genes involved in the response to DNA damage (SOS response), including recA and lexA. In the presence of single-stranded DNA, RecA interacts with LexA causing an autocatalytic cleavage which disrupts the DNA-binding part of LexA, leading to derepression of the SOS regulon and eventually DNA repair. In Clostridium kluyveri (strain NBRC 12016), this protein is LexA repressor.